The primary structure comprises 524 residues: Inosine-5'-monophosphate dehydrogenase (524 aa).

CBS domains are found at residues 121 to 180 (FILD…NTPV) and 184 to 242 (MTPR…PLAS). NAD(+) is bound by residues 280 to 282 (DSS) and 330 to 332 (GMG). Glycine 332 and glycine 334 together coordinate K(+). Serine 335 contacts IMP. Cysteine 337 serves as a coordination point for K(+). Residue cysteine 337 is the Thioimidate intermediate of the active site. IMP contacts are provided by residues 370 to 372 (DGG), 393 to 394 (GG), and 417 to 421 (YRGMG). Arginine 439 functions as the Proton acceptor in the catalytic mechanism. Residue glutamine 451 participates in IMP binding. Positions 510 and 511 each coordinate K(+).

It belongs to the IMPDH/GMPR family. As to quaternary structure, homotetramer. K(+) serves as cofactor.

The protein localises to the cytoplasm. The enzyme catalyses IMP + NAD(+) + H2O = XMP + NADH + H(+). It participates in purine metabolism; XMP biosynthesis via de novo pathway; XMP from IMP: step 1/1. With respect to regulation, mycophenolic acid (MPA) is a non-competitive inhibitor that prevents formation of the closed enzyme conformation by binding to the same site as the amobile flap. In contrast, mizoribine monophosphate (MZP) is a competitive inhibitor that induces the closed conformation. MPA is a potent inhibitor of mammalian IMPDHs but a poor inhibitor of the bacterial enzymes. MZP is a more potent inhibitor of bacterial IMPDH. Catalyzes the conversion of inosine 5'-phosphate (IMP) to xanthosine 5'-phosphate (XMP), the first committed and rate-limiting step in the de novo synthesis of guanine nucleotides, and therefore plays an important role in the regulation of cell growth. The polypeptide is Inosine-5'-monophosphate dehydrogenase (gua1) (Schizosaccharomyces pombe (strain 972 / ATCC 24843) (Fission yeast)).